The following is a 405-amino-acid chain: Serine/threonine-protein kinase 2 (405 aa).

A Protein kinase domain is found at 54-405 (NDDFYHISTG…IFSDWINGGN (352 aa)). Residues 60–68 (ISTGGYGIV) and K84 contribute to the ATP site. Catalysis depends on D274, which acts as the Proton acceptor.

It belongs to the protein kinase superfamily. Ser/Thr protein kinase family. Poxviruses subfamily. In terms of processing, phosphorylated in vivo. Autophosphorylated in vitro.

Its subcellular location is the host endoplasmic reticulum. It localises to the host endoplasmic reticulum-Golgi intermediate compartment. The catalysed reaction is L-seryl-[protein] + ATP = O-phospho-L-seryl-[protein] + ADP + H(+). It carries out the reaction L-threonyl-[protein] + ATP = O-phospho-L-threonyl-[protein] + ADP + H(+). Functionally, essential serine-protein kinase involved in the early stage of virion morphogenesis. This is Serine/threonine-protein kinase 2 (OPG054) from Vaccinia virus (strain L-IVP) (VACV).